We begin with the raw amino-acid sequence, 146 residues long: 3-hydroxyacyl-[acyl-carrier-protein] dehydratase FabZ (146 aa).

Residue H49 is part of the active site.

This sequence belongs to the thioester dehydratase family. FabZ subfamily.

The protein resides in the cytoplasm. The enzyme catalyses a (3R)-hydroxyacyl-[ACP] = a (2E)-enoyl-[ACP] + H2O. Its function is as follows. Involved in unsaturated fatty acids biosynthesis. Catalyzes the dehydration of short chain beta-hydroxyacyl-ACPs and long chain saturated and unsaturated beta-hydroxyacyl-ACPs. In Azotobacter vinelandii (strain DJ / ATCC BAA-1303), this protein is 3-hydroxyacyl-[acyl-carrier-protein] dehydratase FabZ.